The chain runs to 239 residues: MLLLAGLGNPGPQYQNHRHNVGFMAADAIFRRHSFSPWSKKFSALVAEGRVGTEKLLLVKPQTFMNLSGQAVGEAMRFYKLQPSDIIVFYDELDLAPGKVRVKRGSGSGGHNGIKSIDAHCGQDYRRVRIGIGHPGDKARVTPHVLGDFAKADHAWLDPLLDAMAENVDLLITGDESGFMNKASLAVQGKAADIEMAGEKPAQKGRSHIRQARPKAPPAELPSSGPMAAMLKKLFGGKE.

Tyr14 contributes to the tRNA binding site. The active-site Proton acceptor is the His19. TRNA is bound by residues Phe64, Asn66, and Asn112. Residues Glu199–Met227 form a disordered region. Positions Gln203 to Arg213 are enriched in basic residues.

This sequence belongs to the PTH family. Monomer.

It localises to the cytoplasm. It carries out the reaction an N-acyl-L-alpha-aminoacyl-tRNA + H2O = an N-acyl-L-amino acid + a tRNA + H(+). Functionally, hydrolyzes ribosome-free peptidyl-tRNAs (with 1 or more amino acids incorporated), which drop off the ribosome during protein synthesis, or as a result of ribosome stalling. Its function is as follows. Catalyzes the release of premature peptidyl moieties from peptidyl-tRNA molecules trapped in stalled 50S ribosomal subunits, and thus maintains levels of free tRNAs and 50S ribosomes. This chain is Peptidyl-tRNA hydrolase, found in Chelativorans sp. (strain BNC1).